Reading from the N-terminus, the 367-residue chain is MSLADSVLAVNNDLPIRTDKPVHSGKVRSVYWLTDTDSRRLIRDKGYDVPEDTPLAIMVISDRISAFDCIFHGEGDLQGIPGKGAALNAISNHWFGLFAENGLADSHILDIPHPFVWIVQKARPIKVEAICRQYITGSMWRAYSKGERVFCGITLPEGLSKDQKLPELLITPSTKGILTGIPGVPAQDDVNISRSDIEANYQAFGFEKPQDIDLYETLLKQGFKVISDALAKLDQVFVDTKFEFGYVNDKNGQSKLIYMDEVGTPDSSRIWDGAAYREGKIVENSKEGFRQFLLNHFDDADILLNKDRMPEREALARDNDLPLDAMMNVSRTYIGVAEKVTGSSIPLPANPKADIIKVLREQYDLIV.

This sequence belongs to the SAICAR synthetase family.

The enzyme catalyses 5-amino-1-(5-phospho-D-ribosyl)imidazole-4-carboxylate + L-aspartate + ATP = (2S)-2-[5-amino-1-(5-phospho-beta-D-ribosyl)imidazole-4-carboxamido]succinate + ADP + phosphate + 2 H(+). It functions in the pathway purine metabolism; IMP biosynthesis via de novo pathway; 5-amino-1-(5-phospho-D-ribosyl)imidazole-4-carboxamide from 5-amino-1-(5-phospho-D-ribosyl)imidazole-4-carboxylate: step 1/2. The polypeptide is Phosphoribosylaminoimidazole-succinocarboxamide synthase (Shewanella frigidimarina (strain NCIMB 400)).